Reading from the N-terminus, the 112-residue chain is UPF0102 protein THEYE_A1950 (112 aa).

This sequence belongs to the UPF0102 family.

This chain is UPF0102 protein THEYE_A1950, found in Thermodesulfovibrio yellowstonii (strain ATCC 51303 / DSM 11347 / YP87).